Here is a 42-residue protein sequence, read N- to C-terminus: Small, acid-soluble spore protein L (42 aa).

Positions 1-42 are disordered; it reads MKKKDKGRLTGGVTPQGDLEGNTHNDPKTELEERAKKSNTKR. Residues 21-36 are compositionally biased toward basic and acidic residues; the sequence is GNTHNDPKTELEERAK.

Its subcellular location is the spore core. This chain is Small, acid-soluble spore protein L (sspL), found in Bacillus subtilis (strain 168).